We begin with the raw amino-acid sequence, 369 residues long: Flagellar P-ring protein (369 aa).

A signal peptide spans 1-23 (MRIASFFTVLLTLLTLNIAPASA).

This sequence belongs to the FlgI family. As to quaternary structure, the basal body constitutes a major portion of the flagellar organelle and consists of four rings (L,P,S, and M) mounted on a central rod.

Its subcellular location is the periplasm. The protein resides in the bacterial flagellum basal body. Functionally, assembles around the rod to form the L-ring and probably protects the motor/basal body from shearing forces during rotation. In Pectobacterium carotovorum subsp. carotovorum (strain PC1), this protein is Flagellar P-ring protein.